Reading from the N-terminus, the 715-residue chain is Polyribonucleotide nucleotidyltransferase (715 aa).

Mg(2+)-binding residues include Asp-485 and Asp-491. The 60-residue stretch at 552–611 (PRIHTMKIDPKKIKDVIGKGGAVIRALTEETGTSIDIDDDGTVKIAATDNNAAKAVMARI) folds into the KH domain. Residues 621-689 (NAIYKGKVTR…RQNRIRLTMK (69 aa)) enclose the S1 motif domain. Positions 695-715 (TPVAENVTEEAEVSSEQQAEI) are disordered.

The protein belongs to the polyribonucleotide nucleotidyltransferase family. In terms of assembly, component of the RNA degradosome, which is a multiprotein complex involved in RNA processing and mRNA degradation. Mg(2+) is required as a cofactor.

It localises to the cytoplasm. It catalyses the reaction RNA(n+1) + phosphate = RNA(n) + a ribonucleoside 5'-diphosphate. Functionally, involved in mRNA degradation. Catalyzes the phosphorolysis of single-stranded polyribonucleotides processively in the 3'- to 5'-direction. The chain is Polyribonucleotide nucleotidyltransferase from Actinobacillus pleuropneumoniae serotype 7 (strain AP76).